Here is an 88-residue protein sequence, read N- to C-terminus: Apolipoprotein C-I (88 aa).

The first 26 residues, 1 to 26, serve as a signal peptide directing secretion; sequence MRLFIALPVLIVVVAMALEGPAPAQA.

The protein belongs to the apolipoprotein C1 family.

Its subcellular location is the secreted. Functionally, inhibitor of lipoprotein binding to the low density lipoprotein (LDL) receptor, LDL receptor-related protein, and very low density lipoprotein (VLDL) receptor. Associates with high density lipoproteins (HDL) and the triacylglycerol-rich lipoproteins in the plasma and makes up about 10% of the protein of the VLDL and 2% of that of HDL. Appears to interfere directly with fatty acid uptake and is also the major plasma inhibitor of cholesteryl ester transfer protein (CETP). Modulates the interaction of APOE with beta-migrating VLDL and inhibits binding of beta-VLDL to the LDL receptor-related protein. Binds free fatty acids and reduces their intracellular esterification. This is Apolipoprotein C-I (Apoc1) from Grammomys surdaster (African woodland thicket rat).